A 76-amino-acid chain; its full sequence is Omega-conotoxin-like TeA61 (76 aa).

The signal sequence occupies residues 1-22 (MKLTCMMIVAVLFLTAWTFATA). The propeptide occupies 23 to 51 (DDSSNGLGNLFLKAHHEMKNPEASKLNER). Cystine bridges form between C52–C67, C59–C70, and C66–C75.

The protein belongs to the conotoxin O1 superfamily. As to expression, expressed by the venom duct.

Its subcellular location is the secreted. Omega-conotoxins act at presynaptic membranes, they bind and block voltage-gated calcium channels (Cav). The chain is Omega-conotoxin-like TeA61 from Conus textile (Cloth-of-gold cone).